The primary structure comprises 284 residues: MEMO1 family protein LS215_2219 (284 aa).

It belongs to the MEMO1 family.

The chain is MEMO1 family protein LS215_2219 from Saccharolobus islandicus (strain L.S.2.15 / Lassen #1) (Sulfolobus islandicus).